The primary structure comprises 87 residues: MKTLLLTLVVVTIVCLDLGYTKTCLISPSSTPQTCPQGQDTCFLKALCDKLCPIRGPVIEQGCAATCPEFRSNYRSLLCCTTDNCNH.

An N-terminal signal peptide occupies residues 1-21 (MKTLLLTLVVVTIVCLDLGYT). Cystine bridges form between Cys24–Cys42, Cys35–Cys63, Cys48–Cys52, Cys67–Cys79, and Cys80–Cys85.

The protein belongs to the three-finger toxin family. Long-chain subfamily. Kappa-neurotoxin sub-subfamily. Homo- and heterodimer; non-covalently linked. As to expression, expressed by the venom gland.

The protein resides in the secreted. Postsynaptic neurotoxin that binds and inhibits neuronal nicotinic acetylcholine receptors (nAChR) with high affinity (IC(50)&lt;100 nM). Is a selective, and slowly reversible antagonist of alpha-3/CHRNA3-containing and some alpha-4/CHRNA4-containing AChRs. This Bungarus multicinctus (Many-banded krait) protein is Kappa-5-bungarotoxin.